The chain runs to 137 residues: Structural protein A137R (137 aa).

Belongs to the asfivirus A137R family. Interacts with host TBK1.

It is found in the virion. Its subcellular location is the host cytoplasm. In terms of biological role, plays a role in the inhibition of the host innate immune response. Mechanistically, promotes the autophagy-mediated lysosomal degradation of host TBK1 and affects IRF3 nuclear translocation to block type I IFN production. In Ornithodoros (relapsing fever ticks), this protein is Structural protein A137R.